The chain runs to 224 residues: Putative cytochrome c-type biogenesis protein DbsD-like (224 aa).

A run of 5 helical transmembrane segments spans residues phenylalanine 32–valine 52, phenylalanine 74–isoleucine 94, glycine 104–valine 124, glycine 150–isoleucine 170, and isoleucine 176–isoleucine 196.

Belongs to the DsbD family.

The protein localises to the plastid. It localises to the chloroplast membrane. Its function is as follows. Could be involved in cytochrome c synthesis. The polypeptide is Putative cytochrome c-type biogenesis protein DbsD-like (Pyropia yezoensis (Susabi-nori)).